Here is a 555-residue protein sequence, read N- to C-terminus: MSDIEIARAASKLAITQIGERLGISPGDLQPYGHDKAKISASFLHSLEDRKDGKLILVTAINPTPAGEGKTTTTVGLVDGLNRIGAKAMVCVREPSLGPCFGVKGGAAGGGRAQVVPMEDINLHFTGDFHAITSAHNLLAAMIDNHIYWGNEQDLDTRRIAWRRVVDMNDRALREMVGALGGVRNGFPRETGFDITVASEVMAILCLARDLADLEERLGQIVIGYRRDKTPVHARDIKAHQAMTVLLKEAMQPNLVQTLENNPALVHGGPFANIAHGCNSVVATRAALKLADYVVTEAGFGADLGAEKFFDIKCRKAGLRPAAAVIVATVRALKMNGGVAKTELGHEDVAALVRGAVNLGRHVENVRGFGVPVIVAINHFLSDTPAEIAALQDYAASIGVEAVLCRHWAEGGAGIEELARKVAAMADSGIADFQPLYPDDMPLFAKIETVAKRIYRAGSVTADRAVIDQLSQFEAMGYGDLPVCIAKTQYSFSTDPSLLGAPDGHEVHVRDVRLSAGAGFVVAITGDIMTMPGLPRKPAAETIRLDDDGLVEGLF.

Thr64–Thr71 lines the ATP pocket.

It belongs to the formate--tetrahydrofolate ligase family.

The enzyme catalyses (6S)-5,6,7,8-tetrahydrofolate + formate + ATP = (6R)-10-formyltetrahydrofolate + ADP + phosphate. Its pathway is one-carbon metabolism; tetrahydrofolate interconversion. In Allorhizobium ampelinum (strain ATCC BAA-846 / DSM 112012 / S4) (Agrobacterium vitis (strain S4)), this protein is Formate--tetrahydrofolate ligase.